Reading from the N-terminus, the 432-residue chain is Gamma-glutamyl phosphate reductase (432 aa).

Belongs to the gamma-glutamyl phosphate reductase family.

Its subcellular location is the cytoplasm. The enzyme catalyses L-glutamate 5-semialdehyde + phosphate + NADP(+) = L-glutamyl 5-phosphate + NADPH + H(+). The protein operates within amino-acid biosynthesis; L-proline biosynthesis; L-glutamate 5-semialdehyde from L-glutamate: step 2/2. Catalyzes the NADPH-dependent reduction of L-glutamate 5-phosphate into L-glutamate 5-semialdehyde and phosphate. The product spontaneously undergoes cyclization to form 1-pyrroline-5-carboxylate. This chain is Gamma-glutamyl phosphate reductase, found in Methylorubrum extorquens (strain CM4 / NCIMB 13688) (Methylobacterium extorquens).